The chain runs to 189 residues: Holliday junction branch migration complex subunit RuvA (189 aa).

Residues 1–63 (MIYAMYGVLE…DDEISLYGFS (63 aa)) are domain I. The segment at 64–135 (DVLKLKLFEK…ELKDSMKEFD (72 aa)) is domain II. A flexible linker region spans residues 135–139 (DVTLT). The segment at 140-189 (EKDKKILEAIEALVTLGFSRNQSKKAVTQILKKDDSLDDIIKKALKFLSR) is domain III.

The protein belongs to the RuvA family. Homotetramer. Forms an RuvA(8)-RuvB(12)-Holliday junction (HJ) complex. HJ DNA is sandwiched between 2 RuvA tetramers; dsDNA enters through RuvA and exits via RuvB. An RuvB hexamer assembles on each DNA strand where it exits the tetramer. Each RuvB hexamer is contacted by two RuvA subunits (via domain III) on 2 adjacent RuvB subunits; this complex drives branch migration. In the full resolvosome a probable DNA-RuvA(4)-RuvB(12)-RuvC(2) complex forms which resolves the HJ.

The protein localises to the cytoplasm. Its function is as follows. The RuvA-RuvB-RuvC complex processes Holliday junction (HJ) DNA during genetic recombination and DNA repair, while the RuvA-RuvB complex plays an important role in the rescue of blocked DNA replication forks via replication fork reversal (RFR). RuvA specifically binds to HJ cruciform DNA, conferring on it an open structure. The RuvB hexamer acts as an ATP-dependent pump, pulling dsDNA into and through the RuvAB complex. HJ branch migration allows RuvC to scan DNA until it finds its consensus sequence, where it cleaves and resolves the cruciform DNA. In Thermosipho melanesiensis (strain DSM 12029 / CIP 104789 / BI429), this protein is Holliday junction branch migration complex subunit RuvA.